The primary structure comprises 196 residues: Pyridoxal 5'-phosphate synthase subunit PdxT (196 aa).

46-48 contributes to the L-glutamine binding site; it reads GES. Residue Cys78 is the Nucleophile of the active site. Residues Arg105 and 133 to 134 contribute to the L-glutamine site; that span reads IR. Active-site charge relay system residues include His169 and Glu171.

Belongs to the glutaminase PdxT/SNO family. As to quaternary structure, in the presence of PdxS, forms a dodecamer of heterodimers. Only shows activity in the heterodimer.

It carries out the reaction aldehydo-D-ribose 5-phosphate + D-glyceraldehyde 3-phosphate + L-glutamine = pyridoxal 5'-phosphate + L-glutamate + phosphate + 3 H2O + H(+). It catalyses the reaction L-glutamine + H2O = L-glutamate + NH4(+). It participates in cofactor biosynthesis; pyridoxal 5'-phosphate biosynthesis. In terms of biological role, catalyzes the hydrolysis of glutamine to glutamate and ammonia as part of the biosynthesis of pyridoxal 5'-phosphate. The resulting ammonia molecule is channeled to the active site of PdxS. This Geobacillus stearothermophilus (Bacillus stearothermophilus) protein is Pyridoxal 5'-phosphate synthase subunit PdxT.